We begin with the raw amino-acid sequence, 268 residues long: (+)-cis,trans-nepetalactol synthase NEPS2 (268 aa).

NAD(+) contacts are provided by residues 16-22, 41-43, 65-66, asparagine 92, 163-167, and 196-200; these read GGASGIG, DIQ, DI, YVMSK, and VLTPL.

It belongs to the short-chain dehydrogenases/reductases (SDR) family.

The catalysed reaction is (S)-8-oxocitronellyl enol = cis-trans-nepetalactol. In terms of biological role, functions as a non-oxidoreductive cyclase to promote the formation of cis-trans-nepetalactol. Cis-trans-nepetalactol is then oxidized by NEPS1 into cis-trans-nepetalactone, which belongs to a family of metabolites that are both insect-repellent and have euphoric effect in cats. Binds NAD(+) as classical short-chain dehydrogenase/reductase (SDR), but does not utilize it for its redox-neutral cyclase activity. This is (+)-cis,trans-nepetalactol synthase NEPS2 from Nepeta racemosa (Catmint).